The sequence spans 749 residues: Chaperone protein DnaK 1 (749 aa).

Thr198 is modified (phosphothreonine; by autocatalysis). Composition is skewed to basic and acidic residues over residues 643 to 653 (RWDADPWDRSR), 661 to 694 (YDDRRSPVSDPYRGERWVEEQTSMSRREPVRDRN), and 711 to 724 (PTWEEDQPPRRDRS). Positions 643 to 749 (RWDADPWDRS…GWDDDDDEWF (107 aa)) are disordered. Over residues 740–749 (GWDDDDDEWF) the composition is skewed to acidic residues.

The protein belongs to the heat shock protein 70 family.

Acts as a chaperone. The sequence is that of Chaperone protein DnaK 1 from Synechococcus sp. (strain ATCC 27144 / PCC 6301 / SAUG 1402/1) (Anacystis nidulans).